The following is a 401-amino-acid chain: Phosphoglycerate kinase (401 aa).

Residues 21-23 (DFN), arginine 36, 59-62 (HLGR), arginine 119, and arginine 160 contribute to the substrate site. Residues lysine 212, glutamate 330, and 357–360 (GGDS) each bind ATP.

The protein belongs to the phosphoglycerate kinase family. In terms of assembly, monomer.

Its subcellular location is the cytoplasm. The catalysed reaction is (2R)-3-phosphoglycerate + ATP = (2R)-3-phospho-glyceroyl phosphate + ADP. It participates in carbohydrate degradation; glycolysis; pyruvate from D-glyceraldehyde 3-phosphate: step 2/5. The sequence is that of Phosphoglycerate kinase from Limosilactobacillus fermentum (strain NBRC 3956 / LMG 18251) (Lactobacillus fermentum).